Here is a 238-residue protein sequence, read N- to C-terminus: Large ribosomal subunit protein uL1 (238 aa).

This sequence belongs to the universal ribosomal protein uL1 family. Part of the 50S ribosomal subunit.

In terms of biological role, binds directly to 23S rRNA. The L1 stalk is quite mobile in the ribosome, and is involved in E site tRNA release. Its function is as follows. Protein L1 is also a translational repressor protein, it controls the translation of the L11 operon by binding to its mRNA. The chain is Large ribosomal subunit protein uL1 from Nostoc sp. (strain PCC 7120 / SAG 25.82 / UTEX 2576).